The sequence spans 185 residues: Elongation factor P (185 aa).

It belongs to the elongation factor P family.

It localises to the cytoplasm. The protein operates within protein biosynthesis; polypeptide chain elongation. Its function is as follows. Involved in peptide bond synthesis. Stimulates efficient translation and peptide-bond synthesis on native or reconstituted 70S ribosomes in vitro. Probably functions indirectly by altering the affinity of the ribosome for aminoacyl-tRNA, thus increasing their reactivity as acceptors for peptidyl transferase. This is Elongation factor P from Nitratidesulfovibrio vulgaris (strain DP4) (Desulfovibrio vulgaris).